Consider the following 404-residue polypeptide: NADH-quinone oxidoreductase subunit D 1 (404 aa).

It belongs to the complex I 49 kDa subunit family. As to quaternary structure, NDH-1 is composed of 14 different subunits. Subunits NuoB, C, D, E, F, and G constitute the peripheral sector of the complex.

The protein resides in the cell inner membrane. The enzyme catalyses a quinone + NADH + 5 H(+)(in) = a quinol + NAD(+) + 4 H(+)(out). NDH-1 shuttles electrons from NADH, via FMN and iron-sulfur (Fe-S) centers, to quinones in the respiratory chain. The immediate electron acceptor for the enzyme in this species is believed to be ubiquinone. Couples the redox reaction to proton translocation (for every two electrons transferred, four hydrogen ions are translocated across the cytoplasmic membrane), and thus conserves the redox energy in a proton gradient. The sequence is that of NADH-quinone oxidoreductase subunit D 1 from Sorangium cellulosum (strain So ce56) (Polyangium cellulosum (strain So ce56)).